A 304-amino-acid polypeptide reads, in one-letter code: ATP phosphoribosyltransferase (304 aa).

The protein belongs to the ATP phosphoribosyltransferase family. Long subfamily. Mg(2+) serves as cofactor.

It is found in the cytoplasm. The catalysed reaction is 1-(5-phospho-beta-D-ribosyl)-ATP + diphosphate = 5-phospho-alpha-D-ribose 1-diphosphate + ATP. The protein operates within amino-acid biosynthesis; L-histidine biosynthesis; L-histidine from 5-phospho-alpha-D-ribose 1-diphosphate: step 1/9. Its activity is regulated as follows. Feedback inhibited by histidine. Functionally, catalyzes the condensation of ATP and 5-phosphoribose 1-diphosphate to form N'-(5'-phosphoribosyl)-ATP (PR-ATP). Has a crucial role in the pathway because the rate of histidine biosynthesis seems to be controlled primarily by regulation of HisG enzymatic activity. The sequence is that of ATP phosphoribosyltransferase from Xanthomonas campestris pv. campestris (strain 8004).